Reading from the N-terminus, the 319-residue chain is tRNA pseudouridine synthase B (319 aa).

The Nucleophile role is filled by Asp-49.

This sequence belongs to the pseudouridine synthase TruB family. Type 1 subfamily.

It catalyses the reaction uridine(55) in tRNA = pseudouridine(55) in tRNA. Its function is as follows. Responsible for synthesis of pseudouridine from uracil-55 in the psi GC loop of transfer RNAs. The sequence is that of tRNA pseudouridine synthase B from Aeromonas salmonicida (strain A449).